The primary structure comprises 520 residues: Probable glycine dehydrogenase (decarboxylating) subunit 2 (520 aa).

The disordered stretch occupies residues 1 to 29 (MWRQSRWNEPLITEMSRRGRRGALPPRPD). The residue at position 279 (Lys-279) is an N6-(pyridoxal phosphate)lysine.

The protein belongs to the GcvP family. C-terminal subunit subfamily. The glycine cleavage system is composed of four proteins: P, T, L and H. In this organism, the P 'protein' is a heterodimer of two subunits. Pyridoxal 5'-phosphate serves as cofactor.

The enzyme catalyses N(6)-[(R)-lipoyl]-L-lysyl-[glycine-cleavage complex H protein] + glycine + H(+) = N(6)-[(R)-S(8)-aminomethyldihydrolipoyl]-L-lysyl-[glycine-cleavage complex H protein] + CO2. Functionally, the glycine cleavage system catalyzes the degradation of glycine. The P protein binds the alpha-amino group of glycine through its pyridoxal phosphate cofactor; CO(2) is released and the remaining methylamine moiety is then transferred to the lipoamide cofactor of the H protein. The sequence is that of Probable glycine dehydrogenase (decarboxylating) subunit 2 from Aeropyrum pernix (strain ATCC 700893 / DSM 11879 / JCM 9820 / NBRC 100138 / K1).